A 175-amino-acid chain; its full sequence is Alpha-crystallin B chain (175 aa).

Methionine 1 carries the N-acetylmethionine modification. Position 19 is a phosphoserine (serine 19). Serine 41 carries O-linked (GlcNAc) serine glycosylation. Phosphoserine occurs at positions 45 and 59. The sHSP domain occupies arginine 56–glutamate 164. Histidine 83 contacts Zn(2+). Lysine 90 carries an N-linked (Glc) (glycation) lysine glycan. At lysine 92 the chain carries N6-acetyllysine; alternate. N-linked (Glc) (glycation) lysine; alternate glycosylation is present at lysine 92. The Zn(2+) site is built by histidine 104, glutamate 106, histidine 111, and histidine 119. The interval threonine 144 to lysine 175 is disordered. An N6-acetyllysine modification is found at lysine 166. O-linked (GlcNAc) threonine glycosylation is present at threonine 170.

This sequence belongs to the small heat shock protein (HSP20) family. In terms of assembly, heteromer composed of three CRYAA and one CRYAB subunits. Aggregates with homologous proteins, including the small heat shock protein HSPB1, to form large heteromeric complexes. Inter-subunit bridging via zinc ions enhances stability, which is crucial as there is no protein turn over in the lens. Interacts with HSPBAP1 and TTN/titin. Interacts with TMEM109; in the cellular response to DNA damage. Interacts with DES; binds rapidly during early stages of DES filament assembly and a reduced binding seen in the later stages. Interacts with TMED10; the interaction mediates the translocation from the cytoplasm into the ERGIC (endoplasmic reticulum-Golgi intermediate compartment) and thereby secretion. Interacts with ATP6V1A and with MTOR, forming a ternary complex. Post-translationally, it is not known whether either Lys-90, or Lys-92, or both are glycated. In terms of tissue distribution, lens as well as other tissues.

Its subcellular location is the cytoplasm. The protein resides in the nucleus. The protein localises to the secreted. It is found in the lysosome. Its function is as follows. May contribute to the transparency and refractive index of the lens. Has chaperone-like activity, preventing aggregation of various proteins under a wide range of stress conditions. In lens epithelial cells, stabilizes the ATP6V1A protein, preventing its degradation by the proteasome. This is Alpha-crystallin B chain (CRYAB) from Bos taurus (Bovine).